A 188-amino-acid chain; its full sequence is Probable nicotinate-nucleotide adenylyltransferase (188 aa).

The protein belongs to the NadD family.

The catalysed reaction is nicotinate beta-D-ribonucleotide + ATP + H(+) = deamido-NAD(+) + diphosphate. The protein operates within cofactor biosynthesis; NAD(+) biosynthesis; deamido-NAD(+) from nicotinate D-ribonucleotide: step 1/1. Its function is as follows. Catalyzes the reversible adenylation of nicotinate mononucleotide (NaMN) to nicotinic acid adenine dinucleotide (NaAD). The sequence is that of Probable nicotinate-nucleotide adenylyltransferase from Listeria monocytogenes serotype 4b (strain F2365).